Consider the following 156-residue polypeptide: Endoribonuclease YbeY (156 aa).

The Zn(2+) site is built by histidine 122, histidine 126, and histidine 132.

The protein belongs to the endoribonuclease YbeY family. Zn(2+) is required as a cofactor.

The protein resides in the cytoplasm. Functionally, single strand-specific metallo-endoribonuclease involved in late-stage 70S ribosome quality control and in maturation of the 3' terminus of the 16S rRNA. The polypeptide is Endoribonuclease YbeY (Bacillus cereus (strain G9842)).